Here is a 581-residue protein sequence, read N- to C-terminus: 4-hydroxy-3-methylbut-2-en-1-yl diphosphate synthase (flavodoxin) (581 aa).

C489, C492, C523, and E530 together coordinate [4Fe-4S] cluster.

It belongs to the IspG family. [4Fe-4S] cluster serves as cofactor.

The catalysed reaction is (2E)-4-hydroxy-3-methylbut-2-enyl diphosphate + oxidized [flavodoxin] + H2O + 2 H(+) = 2-C-methyl-D-erythritol 2,4-cyclic diphosphate + reduced [flavodoxin]. The protein operates within isoprenoid biosynthesis; isopentenyl diphosphate biosynthesis via DXP pathway; isopentenyl diphosphate from 1-deoxy-D-xylulose 5-phosphate: step 5/6. Its function is as follows. Converts 2C-methyl-D-erythritol 2,4-cyclodiphosphate (ME-2,4cPP) into 1-hydroxy-2-methyl-2-(E)-butenyl 4-diphosphate. The protein is 4-hydroxy-3-methylbut-2-en-1-yl diphosphate synthase (flavodoxin) of Porphyromonas gingivalis (strain ATCC BAA-308 / W83).